We begin with the raw amino-acid sequence, 466 residues long: Ribulose bisphosphate carboxylase large chain (466 aa).

N6,N6,N6-trimethyllysine is present on lysine 5. Residues asparagine 114 and threonine 164 each contribute to the substrate site. Catalysis depends on lysine 166, which acts as the Proton acceptor. Lysine 168 contributes to the substrate binding site. Positions 192, 194, and 195 each coordinate Mg(2+). An N6-carboxylysine modification is found at lysine 192. Histidine 285 (proton acceptor) is an active-site residue. Substrate contacts are provided by arginine 286, histidine 318, and serine 370.

Belongs to the RuBisCO large chain family. Type I subfamily. In terms of assembly, heterohexadecamer of 8 large chains and 8 small chains. Mg(2+) serves as cofactor.

Its subcellular location is the plastid. It is found in the chloroplast. It carries out the reaction 2 (2R)-3-phosphoglycerate + 2 H(+) = D-ribulose 1,5-bisphosphate + CO2 + H2O. The catalysed reaction is D-ribulose 1,5-bisphosphate + O2 = 2-phosphoglycolate + (2R)-3-phosphoglycerate + 2 H(+). In terms of biological role, ruBisCO catalyzes two reactions: the carboxylation of D-ribulose 1,5-bisphosphate, the primary event in carbon dioxide fixation, as well as the oxidative fragmentation of the pentose substrate in the photorespiration process. Both reactions occur simultaneously and in competition at the same active site. The chain is Ribulose bisphosphate carboxylase large chain from Cornus kousa (Kousa dogwood).